The sequence spans 498 residues: MGERPCILAIDQGTTSSRAIVFDAAASVLAVAQTEFPQHYPADGWVEHDPEDIWRSTLEVSRQALQAAEAKGARVVAIGVTNQRETTLIWDRRTGRPIHNAIVWQDRRTAADCAALAADGNETMVQARSGLLLDPYFSATKAAWLLDHVSGARMRAENGHLAFGTVDSFLLWRLTGGRVHATDATNASRTNLFNIHTQDWDPELLRLFRVPAALLPEVKDSADSFGQTDPALFGRPLPVLGLVGDQQGATIGQCCFEPGTIKSTYGTGCFVVVNTGATPVPSRHRLLTTIAYRIDGRTDYALEGSIFIAGAAVQWLRDGLGIVRTAAETEALAAGLPDNGGVYMVPAFTGLGAPHWDAAARGTLTGLTRASGRAHLARAALEASCYQTCDLLAAMREDGATPAALRVDGGMVANGWMVQFLADLLDLPVDRPVVMETTALGAAYLAGRKAGLYGDFAEFTRVWRRDRRFDPAMPTSTRTALLAGWQDAVRRTRSGAPD.

Threonine 14 is an ADP binding site. 3 residues coordinate ATP: threonine 14, threonine 15, and serine 16. Threonine 14 is a sn-glycerol 3-phosphate binding site. Arginine 18 provides a ligand contact to ADP. Residues arginine 84, glutamate 85, tyrosine 136, and aspartate 245 each contribute to the sn-glycerol 3-phosphate site. Arginine 84, glutamate 85, tyrosine 136, aspartate 245, and glutamine 246 together coordinate glycerol. ADP is bound by residues threonine 267 and glycine 310. Threonine 267, glycine 310, glutamine 314, and glycine 410 together coordinate ATP. ADP contacts are provided by glycine 410 and asparagine 414.

This sequence belongs to the FGGY kinase family.

It catalyses the reaction glycerol + ATP = sn-glycerol 3-phosphate + ADP + H(+). The protein operates within polyol metabolism; glycerol degradation via glycerol kinase pathway; sn-glycerol 3-phosphate from glycerol: step 1/1. Its activity is regulated as follows. Inhibited by fructose 1,6-bisphosphate (FBP). Its function is as follows. Key enzyme in the regulation of glycerol uptake and metabolism. Catalyzes the phosphorylation of glycerol to yield sn-glycerol 3-phosphate. This chain is Glycerol kinase, found in Rhodospirillum centenum (strain ATCC 51521 / SW).